A 337-amino-acid polypeptide reads, in one-letter code: MVVKVGINGFGRIGRIVFRNAIEHNDVEIVAVNDPFIEPHYAAYMLKYDSQHGQFKGDIKVEGNDLTINGKTIRFYTEKDPANIPWSETGAYYVVESTGVFTTTDKAKAHLKGGAKKVVISAPSADAPMFVMGVNNETYTKDIEVLSNASCTTNCLAPLAKVIHDKFTIIEGLMTTVHSYTATQKVVDGPSAKDWRGGRTAAQNIIPSSTGAAKAVGKVIPDLNGKLTGMSMRVPTSNVSVVDLTVRLEKGATYDEIKEAVKAAADGPLNGILGYTEDEIVSTDLNGDTRSSIFDAKAGISLNKNFVKLVSWYDNEWGYSRRVLDLLVYIAKVDGNA.

NAD(+)-binding positions include 12–13, Asp34, and Lys79; that span reads RI. D-glyceraldehyde 3-phosphate contacts are provided by residues 150–152, Thr181, 210–211, and Arg233; these read SCT and TG. Cys151 acts as the Nucleophile in catalysis. Asn315 provides a ligand contact to NAD(+).

This sequence belongs to the glyceraldehyde-3-phosphate dehydrogenase family. As to quaternary structure, homotetramer.

Its subcellular location is the cytoplasm. The catalysed reaction is D-glyceraldehyde 3-phosphate + phosphate + NAD(+) = (2R)-3-phospho-glyceroyl phosphate + NADH + H(+). It participates in carbohydrate degradation; glycolysis; pyruvate from D-glyceraldehyde 3-phosphate: step 1/5. The polypeptide is Glyceraldehyde-3-phosphate dehydrogenase (GPD1) (Phaeosphaeria nodorum (strain SN15 / ATCC MYA-4574 / FGSC 10173) (Glume blotch fungus)).